An 874-amino-acid chain; its full sequence is Alanine--tRNA ligase (874 aa).

Positions 564, 568, 665, and 669 each coordinate Zn(2+).

It belongs to the class-II aminoacyl-tRNA synthetase family. It depends on Zn(2+) as a cofactor.

The protein resides in the cytoplasm. It catalyses the reaction tRNA(Ala) + L-alanine + ATP = L-alanyl-tRNA(Ala) + AMP + diphosphate. Functionally, catalyzes the attachment of alanine to tRNA(Ala) in a two-step reaction: alanine is first activated by ATP to form Ala-AMP and then transferred to the acceptor end of tRNA(Ala). Also edits incorrectly charged Ser-tRNA(Ala) and Gly-tRNA(Ala) via its editing domain. The chain is Alanine--tRNA ligase from Polaromonas naphthalenivorans (strain CJ2).